The primary structure comprises 427 residues: Glucose-6-phosphate isomerase (427 aa).

Residue glutamate 277 is the Proton donor of the active site. Residues histidine 298 and lysine 414 contribute to the active site.

This sequence belongs to the GPI family.

Its subcellular location is the cytoplasm. The enzyme catalyses alpha-D-glucose 6-phosphate = beta-D-fructose 6-phosphate. It participates in carbohydrate biosynthesis; gluconeogenesis. The protein operates within carbohydrate degradation; glycolysis; D-glyceraldehyde 3-phosphate and glycerone phosphate from D-glucose: step 2/4. Catalyzes the reversible isomerization of glucose-6-phosphate to fructose-6-phosphate. This is Glucose-6-phosphate isomerase from Mycoplasma mycoides subsp. mycoides SC (strain CCUG 32753 / NCTC 10114 / PG1).